A 496-amino-acid chain; its full sequence is Genome polyprotein (496 aa).

Residues 1–447 (SRCTHLENRD…HTVLGGAFNS (447 aa)) are Extracellular-facing. Intrachain disulfides connect Cys3–Cys30, Cys60–Cys116, Cys60–Cys121, Cys74–Cys105, Cys92–Cys116, and Cys92–Cys121. The interval 98 to 111 (DRGWGNHCGLFGKG) is fusion peptide. Residue Asn154 is glycosylated (N-linked (GlcNAc...) asparagine; by host). 2 disulfides stabilise this stretch: Cys186–Cys290 and Cys307–Cys338. The helical transmembrane segment at 448–468 (IFGGVGFLPKLLMGVALAWLG) threads the bilayer. The Cytoplasmic portion of the chain corresponds to 469 to 479 (LNTRNPTMSIS). The helical transmembrane segment at 480-496 (FLLTGGLVLAMTLGVGA) threads the bilayer.

As to quaternary structure, homodimer; in the endoplasmic reticulum and Golgi. N-glycosylated.

It localises to the virion membrane. The protein localises to the host endoplasmic reticulum membrane. Its function is as follows. Binds to host cell surface receptor and mediates fusion between viral and cellular membranes. Envelope protein is synthesized in the endoplasmic reticulum in the form of heterodimer with protein prM. They play a role in virion budding in the ER, and the newly formed immature particle is covered with 60 spikes composed of heterodimer between precursor prM and envelope protein E. The virion is transported to the Golgi apparatus where the low pH causes dissociation of PrM-E heterodimers and formation of E homodimers. prM-E cleavage is ineficient, and many virions are only partially matured. These uncleaved prM would play a role in immune evasion. This Louping ill virus (strain SB 526) (Li) protein is Genome polyprotein.